The primary structure comprises 345 residues: Platelet-derived growth factor C (345 aa).

The signal sequence occupies residues 1–22 (MLLLGLLLLTSALAGQRTGTRA). The segment covering 24–33 (SNLSSKLQLS) has biased composition (polar residues). A disordered region spans residues 24–45 (SNLSSKLQLSSDKEQNGVQDPR). N-linked (GlcNAc...) asparagine glycosylation occurs at N25. Positions 34–45 (SDKEQNGVQDPR) are enriched in basic and acidic residues. In terms of domain architecture, CUB spans 46–163 (HERVVTISGN…PGFCIHYSII (118 aa)). Residue N55 is glycosylated (N-linked (GlcNAc...) asparagine). 4 disulfide bridges follow: C104–C124, C250–C294, C280–C335, and C287–C337.

It belongs to the PDGF/VEGF growth factor family. As to quaternary structure, homodimer; disulfide-linked. Interacts with PDGFRA homodimers, and with heterodimers formed by PDGFRA and PDGFRB. Interacts (via CUB domain) with PLAT (via kringle domain). Post-translationally, proteolytic removal of the N-terminal CUB domain releasing the core domain is necessary for unmasking the receptor-binding epitopes of the core domain. Cleavage after basic residues in the hinge region (region connecting the CUB and growth factor domains) gives rise to the receptor-binding form. Cleaved by PLAT and PLG. In terms of processing, sumoylated by SUMO1. N-glycosylated. As to expression, mainly expressed in kidney, testis, liver, heart and brain (at protein level). Highly expressed in airway epithelium, interstitial cells and alveolar macrophages in the lung of mice overexpressing IL13. Expressed in the ovaries.

Its subcellular location is the cytoplasm. It localises to the cytosol. It is found in the secreted. The protein resides in the nucleus. The protein localises to the cytoplasmic granule. Its subcellular location is the cell membrane. Its function is as follows. Growth factor that plays an essential role in the regulation of embryonic development, cell proliferation, cell migration, survival and chemotaxis. Potent mitogen and chemoattractant for cells of mesenchymal origin. Required for normal skeleton formation during embryonic development, especially for normal development of the craniofacial skeleton and for normal development of the palate. Required for normal skin morphogenesis during embryonic development. Plays an important role in wound healing, where it appears to be involved in three stages: inflammation, proliferation and remodeling. Plays an important role in angiogenesis and blood vessel development. Involved in fibrotic processes, in which transformation of interstitial fibroblasts into myofibroblasts plus collagen deposition occurs. The CUB domain has mitogenic activity in coronary artery smooth muscle cells, suggesting a role beyond the maintenance of the latency of the PDGF domain. In the nucleus, PDGFC seems to have additional function. This chain is Platelet-derived growth factor C (Pdgfc), found in Mus musculus (Mouse).